The sequence spans 477 residues: MSPQTETKAGVGFKAGVKDYKLTYYTPEYETKDTDILAAFRVSPQPGVPPEEAGAAVAAESSTGTWTTVWTDGLTSLDRYKGRCYHIEPVAGEDSQWICYVAYPLDLFEEGSVTNMFTSIVGNVFGFKALRALRLEDLRIPPTYSKTFQGPPHGIQVERDKLNKYGRPLLGCTIKPKLGLSAKNYGRACYECLRGGLDFTKDDENVNSQPFMRWRDRFVFCAEAIYKSQAETGEIKGHYLNATAGTCEEMIKRAVFARELGVPIVMHDYLTGGFTANTTLAHYCRDNGLLLHIHRAMHAVIDRQKNHGMHFRVLAKALRMSGGDHIHSGTVVGKLEGEREMTLGFVDLLRDDFIEKDRARGIFFTQDWVSMPGVIPVASGGIHVWHMPALTEIFGDDSVLQFGGGTLGHPWGNAPGAAANRVALEACVQARNEGRDLAREGNEIIRAACKWSPELAAACEVWKAIKFEFEPVDTIDK.

Residues 1–2 (MS) constitute a propeptide that is removed on maturation. P3 is subject to N-acetylproline. 2 residues coordinate substrate: N123 and T173. Residue K175 is the Proton acceptor of the active site. A substrate-binding site is contributed by K177. Mg(2+)-binding residues include K201, D203, and E204. K201 is subject to N6-carboxylysine. The active-site Proton acceptor is H294. R295, H327, and S379 together coordinate substrate.

Belongs to the RuBisCO large chain family. Type I subfamily. In terms of assembly, heterohexadecamer of 8 large chains and 8 small chains; disulfide-linked. The disulfide link is formed within the large subunit homodimers. The cofactor is Mg(2+). The disulfide bond which can form between Cys-247 in the large chain dimeric partners within the hexadecamer appears to be associated with oxidative stress and protein turnover.

It localises to the plastid. It is found in the chloroplast. The enzyme catalyses 2 (2R)-3-phosphoglycerate + 2 H(+) = D-ribulose 1,5-bisphosphate + CO2 + H2O. It catalyses the reaction D-ribulose 1,5-bisphosphate + O2 = 2-phosphoglycolate + (2R)-3-phosphoglycerate + 2 H(+). RuBisCO catalyzes two reactions: the carboxylation of D-ribulose 1,5-bisphosphate, the primary event in carbon dioxide fixation, as well as the oxidative fragmentation of the pentose substrate in the photorespiration process. Both reactions occur simultaneously and in competition at the same active site. The chain is Ribulose bisphosphate carboxylase large chain (rbcL) from Triticum aestivum (Wheat).